Consider the following 925-residue polypeptide: Glutamate receptor 3.1 (925 aa).

Residues 1–25 (MLSSMNWVLLSFIIVLGGGLLLSEG) form the signal peptide. The Extracellular portion of the chain corresponds to 26–591 (ASSSRPPVIK…NPWAFLRPFT (566 aa)). N-linked (GlcNAc...) asparagine glycans are attached at residues Asn-309, Asn-341, Asn-359, Asn-419, Asn-437, and Asn-488. A helical transmembrane segment spans residues 592 to 612 (LPMWAVTASFFVIVGAAIWIL). Topologically, residues 613–621 (EHRINDEFR) are cytoplasmic. A helical transmembrane segment spans residues 622–642 (GPPRRQIITILWFTFSTMFFS). At 643–653 (HRETTVSTLGR) the chain is on the cytoplasmic side. Residues 654 to 674 (MVLLIWLFVVLIITSSYTASL) form a helical membrane-spanning segment. The Extracellular segment spans residues 675–831 (TSILTVQQLN…GDSEQLNVHS (157 aa)). 2 N-linked (GlcNAc...) asparagine glycosylation sites follow: Asn-738 and Asn-812. A helical transmembrane segment spans residues 832–852 (FWGMFLVVGIACLVALFIHFF). At 853–925 (KIIRDFCKDT…ISRTASRRPI (73 aa)) the chain is on the cytoplasmic side. Residues 897-925 (KRRLKRKRNNDHSMNANSIISRTASRRPI) form a disordered region. Residues 908 to 919 (HSMNANSIISRT) are compositionally biased toward polar residues.

This sequence belongs to the glutamate-gated ion channel (TC 1.A.10.1) family. May form heteromers. Expressed predominantly in roots. Firt detected in the vascular tissues of the cotyledons, and later in the vasculature of all organs. In leaves, preferentially expressed in guard cells.

Its subcellular location is the membrane. In terms of biological role, glutamate-gated receptor that probably acts as a non-selective cation channel. May be involved in light-signal transduction and calcium homeostasis via the regulation of calcium influx into cells. Required for the long-term calcium oscillation-regulated stomatal movements. The polypeptide is Glutamate receptor 3.1 (GLR3.1) (Arabidopsis thaliana (Mouse-ear cress)).